The sequence spans 360 residues: Methyltransferase pvhD (360 aa).

S-adenosyl-L-methionine is bound by residues 201–202, Asp227, 251–252, Arg267, and Arg268; these read SG and DL.

It belongs to the class I-like SAM-binding methyltransferase superfamily. Cation-independent O-methyltransferase family.

It participates in secondary metabolite biosynthesis. Its function is as follows. Methyltransferase; part of the gene cluster that mediates the biosynthesis of varicidin A, an antifungal natural product containing a cis-octahydrodecalin core. The PKS module of pvhA together with the enoylreductase pvhC catalyze the formation of the polyketide unit which is then conjugated to L-isoleucine by the condensation domain of the NRPS module. Activity of the Dieckmann cyclase domain (RED) of pvhA results in release of an acyclic tetramate. The cytochrome P450 monooxygenase pvhE then catalyzes the oxidation of the C21 methyl group to a to carboxylate group. The methyltransferase pvhD then further methylates the pvhE product. The Diels-Alderase pvhB is able to catalyze Diels-Alder cycloaddition using both pvhE and pvhD products as substrates to form the decalin ring, yielding varicidin B and A, respectively. The protein is Methyltransferase pvhD of Talaromyces variabilis (Penicillium variabile).